The chain runs to 704 residues: G-protein coupled receptor-associated protein LMBRD2B (704 aa).

Residues 1-3 lie on the Extracellular side of the membrane; that stretch reads MSG. Residues 4–21 traverse the membrane as a helical segment; the sequence is AALGIEIVVVFFLALFLL. The Cytoplasmic portion of the chain corresponds to 22–33; that stretch reads HRYGDFKKQQRM. The helical transmembrane segment at 34-54 threads the bilayer; that stretch reads VLFGTLLAWYLCFLIVFILPL. Residues 55 to 111 lie on the Extracellular side of the membrane; that stretch reads DVSTTIYNQCLIDQEAQTQTPSVSPVLSEQTTANASISPAKSTQRVCYKPWSYIPDG. N88 carries an N-linked (GlcNAc...) asparagine glycan. The helical transmembrane segment at 112 to 132 threads the bilayer; the sequence is IMPVFWRVVYWTSQCLTWLLL. The Cytoplasmic portion of the chain corresponds to 133–157; it reads PFMQSYARSGGFTITGKIKTALIEN. The helical transmembrane segment at 158–178 threads the bilayer; it reads AIYYGTYLFIFGSLLIYVAVH. Over 179 to 192 the chain is Extracellular; sequence PQWHLSWYELQTIG. Residues 193 to 213 traverse the membrane as a helical segment; sequence ITAANTWGLFLLVLLLGYGLV. Residues 214–393 lie on the Cytoplasmic side of the membrane; it reads DIPRSYWEAS…ECLLKQWFYR (180 aa). Positions 235–266 form a coiled coil; sequence KAAKLMTEKADSEENLEDVMEEVRKINESIKY. The chain crosses the membrane as a helical span at residues 394–414; that stretch reads VLAVVLALFSVAVVWSECTFF. Over 415 to 438 the chain is Extracellular; sequence STHPVLSLFAVFIQLAERDYNYLY. Residues 439–459 traverse the membrane as a helical segment; it reads IEMACFITIFFLCTCVYSTVF. Residues 460–481 lie on the Cytoplasmic side of the membrane; it reads RIRVFNYYYLASHHQTDAYSLQ. The helical transmembrane segment at 482–502 threads the bilayer; that stretch reads FSGMLFCRLTPPLCLNFLGLI. Residues 503–527 are Extracellular-facing; sequence HMDSAISHQAKKQTAYTSIMGSMRV. The chain crosses the membrane as a helical span at residues 528–548; sequence LSFIANGFYIYYPMLIVVLCI. At 549-704 the chain is on the cytoplasmic side; sequence ATYFSLGTRC…SSRNRIFDDV (156 aa). Residues 576–612 are a coiled coil; the sequence is DLIDEGRELLRRERRKRQRIEDGENRRREWRERYAQR. 2 disordered regions span residues 613–654 and 672–704; these read DENA…QSGR and TLTDDPLQSDTGRHAGGRYLSMSSSRNRIFDDV. Over residues 631 to 654 the composition is skewed to polar residues; that stretch reads YGETLNANTNRQAKYTRSGSQSGR.

The protein belongs to the LIMR family.

The protein localises to the cell membrane. May associate with G-protein coupled receptors and regulate downstream signaling pathways. This chain is G-protein coupled receptor-associated protein LMBRD2B (lmbrd2b), found in Danio rerio (Zebrafish).